A 65-amino-acid polypeptide reads, in one-letter code: Alpha-toxin Lqq4 (65 aa).

The region spanning 3–65 (RDAYIADDKN…VPIRIPGKCR (63 aa)) is the LCN-type CS-alpha/beta domain. The segment at 9 to 13 (DDKNC) is specificity module, loop 1. Cystine bridges form between C13-C64, C17-C37, C23-C47, and C27-C49. Specificity module, loop stretches follow at residues 40–44 (LGKYG) and 57–65 (PIRIPGKCR). Position 65 is an arginine amide (R65).

Belongs to the long (4 C-C) scorpion toxin superfamily. Sodium channel inhibitor family. Alpha subfamily. The recombinant toxin which is used for activity tests is not amidated. However, C-terminal amidation does not appear to play an important role in activity, since the non-amidated recombinant toxin and the native toxin (which is amidated) show similar activities on all sodium channels tested. As to expression, expressed by the venom gland.

The protein resides in the secreted. Its function is as follows. Alpha toxins bind voltage-independently at site-3 of sodium channels (Nav) and inhibit the inactivation of the activated channels, thereby blocking neuronal transmission. Both native and recombinant (non-amidated) toxins inhibit inactivation of Nav1.2/SCN2A (EC(50)=31.2-36.6 nM), Nav1.6/SCN8A (EC(50)=6.9-8.9 nM), and Nav1.7/SCN9A (EC(50)=182.0-260.1 nM). The chain is Alpha-toxin Lqq4 from Leiurus quinquestriatus quinquestriatus (Egyptian scorpion).